The primary structure comprises 310 residues: Alpha/beta hydrolase domain-containing protein 17A (310 aa).

Catalysis depends on charge relay system residues Ser190, Asp255, and His284. Ser307 carries the post-translational modification Phosphoserine.

Belongs to the AB hydrolase superfamily. ABHD17 family. In terms of processing, palmitoylated on cysteine residues located in a cysteine cluster at the N-terminus which promotes membrane localization. Palmitoylation is required for post-synaptic localization and for depalmitoylating activity towards DLG4/PSD95.

It localises to the cell membrane. The protein localises to the endosome membrane. It is found in the cell projection. The protein resides in the dendritic spine. Its subcellular location is the postsynaptic density membrane. The catalysed reaction is S-hexadecanoyl-L-cysteinyl-[protein] + H2O = L-cysteinyl-[protein] + hexadecanoate + H(+). In terms of biological role, hydrolyzes fatty acids from S-acylated cysteine residues in proteins. Has depalmitoylating activity towards NRAS. Has depalmitoylating activity towards DLG4/PSD95. May have depalmitoylating activity towards MAP6. This Bos taurus (Bovine) protein is Alpha/beta hydrolase domain-containing protein 17A.